The chain runs to 872 residues: DNA mismatch repair protein MutS (872 aa).

Position 602–609 (602–609) interacts with ATP; the sequence is GPNMSGKS.

The protein belongs to the DNA mismatch repair MutS family.

Its function is as follows. This protein is involved in the repair of mismatches in DNA. It is possible that it carries out the mismatch recognition step. This protein has a weak ATPase activity. This chain is DNA mismatch repair protein MutS, found in Staphylococcus aureus (strain bovine RF122 / ET3-1).